Consider the following 518-residue polypeptide: MAENNAQNKAKLISETRRRFEAEYVTEKSEKYDSRDVERLQQDDNWVESYLYWRHNVVDETLKMLDESFQWRKEFSVNDLSESSIPRWLLELGGIYLHGYDKEGNKLFWIRVKYHIKDQKTIMDKKKLIAFWLERYAKRENGKPITVMFDMSETGLNSIDMDFVRFIINCFKVYYPKYLSKIVIFDMPWIMNAAFKIVKSWLGPEAVSLLKFTSKNEIQEYVSVEYLPPHMGGTDPFKYSYPPLVDDDFQTPLCENGPIASEDETSSKEDIEGDGKETLETISNEEPPALSEKSNPTESVSKKDENEKVDSKTKTFKKPLSVFKGPLLHISPAEELYFGSIESGEKKTLIVLTNVTKNIVAFKVRTTAPEKYRVKPSNSSCDPGASIDIIVSPHGGLTVSAQDRFLIMAAEMEQSSGTGPAELSQFWKEVPRNKVMEHRLRCHTVESSKPNSLMLKDSISTMSDKTSEDLYLQLNRLLESNRKLEDQLQRSIWFQQLLLALTMVLLDFVVSFFYSLYN.

Residues 1–496 (MAENNAQNKA…QLQRSIWFQQ (496 aa)) are Cytoplasmic-facing. The region spanning 85–239 (IPRWLLELGG…HMGGTDPFKY (155 aa)) is the CRAL-TRIO domain. A disordered region spans residues 252–312 (PLCENGPIAS…KDENEKVDSK (61 aa)). Basic and acidic residues-rich tracts occupy residues 265-279 (TSSKEDIEGDGKETL) and 300-312 (VSKKDENEKVDSK). An MSP domain is found at 327 to 445 (LLHISPAEEL…MEHRLRCHTV (119 aa)). Residues 365–366 (RT) form a required for FFAT motif binding and phosphorylated FFAT motif binding region. A helical; Anchor for type IV membrane protein membrane pass occupies residues 497–518 (LLLALTMVLLDFVVSFFYSLYN).

Homooligomer. Interacts (via MSP domain) with STARD3NL (via FFAT motif), RMDN3 (via FFAT motif), OSBPL1A (via FFAT motif) and CERT1 (via FFAT motif). Interacts (via MSP domain) with STARD3 (via phosphorylated FFAT motif); this interaction depends on the critical phosphorylation of STARD3 on 'Ser-209'. Interacts with RB1CC1 (via phosphorylated FFAT motif), MIGA2 (via phosphorylated FFAT motif) and OSBPL1A (via FFAT motif).

The protein localises to the endoplasmic reticulum membrane. Functionally, endoplasmic reticulum-anchored protein that mediates the formation of contact sites between the endoplasmic (ER) and endosomes, mitochondria or Golgi through interaction with conventional- and phosphorylated-FFAT-containing organelle-bound proteins. In addition, forms endoplasmic reticulum (ER)-lipid droplets (LDs) contacts through a direct protein-membrane interaction and participates in LDs homeostasis. The attachment mechanism involves an amphipathic helix that has an affinity for lipid packing defects present at the surface of LDs. Promotes migration of primary monocytes and neutrophils, in response to various chemokines. This is Motile sperm domain-containing protein 2 from Mus musculus (Mouse).